The sequence spans 1905 residues: von Willebrand factor A domain-containing protein 8 (1905 aa).

A mitochondrion-targeting transit peptide spans 1–45 (MQSRLLLLGAPGGLGDVASRRVRLLLRQVLRGRPGGDQQRLEVRL). Residues 1–260 (MQSRLLLLGA…PLDPPLRSRF (260 aa)) form an interaction with PEX7 region. 446 to 453 (GGKGCGKT) provides a ligand contact to ATP. Over residues 1541–1560 (ERDSNEDVSDPKHGKEDPDN) the composition is skewed to basic and acidic residues. The tract at residues 1541-1583 (ERDSNEDVSDPKHGKEDPDNMPHVGGNTWAGGTGGRDTAGLGG) is disordered. The segment covering 1568–1583 (TWAGGTGGRDTAGLGG) has biased composition (gly residues). The region spanning 1714–1896 (RLRLVVDVSG…KKIPQILQQI (183 aa)) is the VWFA domain.

Monomer. Interacts with PEX7. Interacts with PEX5 in a PEX7-dependent manner. Isoform 1 is predominantly expressed in liver, kidney, pancreas, heart, and skeletal muscle (at protein level).

Its subcellular location is the mitochondrion. Its function is as follows. Exhibits ATPase activity in vitro. The protein is von Willebrand factor A domain-containing protein 8 (Vwa8) of Mus musculus (Mouse).